A 253-amino-acid polypeptide reads, in one-letter code: 5-oxoprolinase subunit A (253 aa).

This sequence belongs to the LamB/PxpA family. As to quaternary structure, forms a complex composed of PxpA, PxpB and PxpC.

It catalyses the reaction 5-oxo-L-proline + ATP + 2 H2O = L-glutamate + ADP + phosphate + H(+). Catalyzes the cleavage of 5-oxoproline to form L-glutamate coupled to the hydrolysis of ATP to ADP and inorganic phosphate. In Chloroflexus aurantiacus (strain ATCC 29364 / DSM 637 / Y-400-fl), this protein is 5-oxoprolinase subunit A.